The sequence spans 94 residues: DASH complex subunit DAD5 (94 aa).

The segment covering 1–20 (MRRSTIVPTSRTSSSSPSPS) has biased composition (low complexity). Residues 1–25 (MRRSTIVPTSRTSSSSPSPSQMKSF) are disordered.

It belongs to the DASH complex HSK3 family. As to quaternary structure, component of the DASH complex consisting of ask1, dad1, dad2, dad3, dad4, dam1, duo1, dad5, spc19 and spc34, with a stoichiometry of one copy of each subunit per complex. Multiple DASH complexes oligomerize to form a ring that encircles spindle microtubules and organizes the rod-like NDC80 complexes of the outer kinetochore. DASH complex oligomerization strengthens microtubule attachments. On cytoplasmic microtubules, DASH complexes appear to form patches instead of rings.

The protein localises to the nucleus. It is found in the cytoplasm. The protein resides in the cytoskeleton. It localises to the spindle. Its subcellular location is the chromosome. The protein localises to the centromere. It is found in the kinetochore. Its function is as follows. Component of the DASH complex that connects microtubules with kinetochores and couples microtubule depolymerisation to chromosome movement; it is involved in retrieving kinetochores to the spindle poles before their re-orientation on the spindle in early mitosis and allows microtubule depolymerization to pull chromosomes apart and resist detachment during anaphase. Kinetochores, consisting of a centromere-associated inner segment and a microtubule-contacting outer segment, play a crucial role in chromosome segregation by mediating the physical connection between centromeric DNA and microtubules. Kinetochores also serve as an input point for the spindle assembly checkpoint, which delays anaphase until all chromosomes have bioriented on the mitotic spindle. The DASH complex mediates bipolar kinetochore-microtubule attachments and facilitates the formation of additional interactions between outer kinetochore components and spindle microtubules. During chromosome movement along the microtubule, it is required both for the sliding of kinetochores along the lateral side of the microtubule and also for microtubule end-on pulling on the kinetochore. Modulates cytoplasmic microtubule dynamics by tracking the plus-end of shortening microtubules and slowing their depolymerization. The polypeptide is DASH complex subunit DAD5 (Schizosaccharomyces pombe (strain 972 / ATCC 24843) (Fission yeast)).